Consider the following 333-residue polypeptide: Adenosine deaminase (333 aa).

Zn(2+) is bound by residues H12 and H14. Substrate is bound by residues H14, D16, and G170. Residue H197 participates in Zn(2+) binding. E200 (proton donor) is an active-site residue. D278 contacts Zn(2+). Substrate is bound at residue D279.

This sequence belongs to the metallo-dependent hydrolases superfamily. Adenosine and AMP deaminases family. Adenosine deaminase subfamily. It depends on Zn(2+) as a cofactor.

The enzyme catalyses adenosine + H2O + H(+) = inosine + NH4(+). The catalysed reaction is 2'-deoxyadenosine + H2O + H(+) = 2'-deoxyinosine + NH4(+). In terms of biological role, catalyzes the hydrolytic deamination of adenosine and 2-deoxyadenosine. This Aliivibrio fischeri (strain MJ11) (Vibrio fischeri) protein is Adenosine deaminase.